The following is a 927-amino-acid chain: Bifunctional glutamine synthetase adenylyltransferase/adenylyl-removing enzyme (927 aa).

The segment at methionine 1–lysine 428 is adenylyl removase. An adenylyl transferase region spans residues aspartate 438 to alanine 927.

The protein belongs to the GlnE family. Requires Mg(2+) as cofactor.

The enzyme catalyses [glutamine synthetase]-O(4)-(5'-adenylyl)-L-tyrosine + phosphate = [glutamine synthetase]-L-tyrosine + ADP. It catalyses the reaction [glutamine synthetase]-L-tyrosine + ATP = [glutamine synthetase]-O(4)-(5'-adenylyl)-L-tyrosine + diphosphate. Its function is as follows. Involved in the regulation of glutamine synthetase GlnA, a key enzyme in the process to assimilate ammonia. When cellular nitrogen levels are high, the C-terminal adenylyl transferase (AT) inactivates GlnA by covalent transfer of an adenylyl group from ATP to specific tyrosine residue of GlnA, thus reducing its activity. Conversely, when nitrogen levels are low, the N-terminal adenylyl removase (AR) activates GlnA by removing the adenylyl group by phosphorolysis, increasing its activity. The regulatory region of GlnE binds the signal transduction protein PII (GlnB) which indicates the nitrogen status of the cell. The polypeptide is Bifunctional glutamine synthetase adenylyltransferase/adenylyl-removing enzyme (Burkholderia pseudomallei (strain K96243)).